The chain runs to 273 residues: Phosphate import ATP-binding protein PstB (273 aa).

Positions 19-258 constitute an ABC transporter domain; the sequence is ISIQNVTISY…FNETEKIFNS (240 aa). Residue 51–58 participates in ATP binding; the sequence is GPSGCGKS.

The protein belongs to the ABC transporter superfamily. Phosphate importer (TC 3.A.1.7) family. As to quaternary structure, the complex is composed of two ATP-binding proteins (PstB), two transmembrane proteins (PstC and PstA) and a solute-binding protein (PstS).

It is found in the cell inner membrane. The enzyme catalyses phosphate(out) + ATP + H2O = ADP + 2 phosphate(in) + H(+). Functionally, part of the ABC transporter complex PstSACB involved in phosphate import. Responsible for energy coupling to the transport system. This is Phosphate import ATP-binding protein PstB from Parasynechococcus marenigrum (strain WH8102).